The following is a 573-amino-acid chain: Protein FAM227B (573 aa).

Residues 429–485 (DNKKDFKRVKQRIKDDIKFLKEQQEQIDKELDRLQAKASKNLQEVKNDFENFLHKLR) are a coiled coil. A compositionally biased stretch (low complexity) spans 497 to 521 (SASPSESLQSLQSPNSSLSSPAMSE). The tract at residues 497–528 (SASPSESLQSLQSPNSSLSSPAMSEDFNSVEE) is disordered.

The protein belongs to the FAM227 family.

The polypeptide is Protein FAM227B (Fam227b) (Rattus norvegicus (Rat)).